The chain runs to 237 residues: 5'-methylthioadenosine/S-adenosylhomocysteine nucleosidase (237 aa).

The active-site Proton acceptor is the Glu12. Substrate-binding positions include Ala78, Ile152, and 173-174 (ME). The Proton donor role is filled by Asp197.

The protein belongs to the PNP/UDP phosphorylase family. MtnN subfamily. As to quaternary structure, homodimer.

The enzyme catalyses S-adenosyl-L-homocysteine + H2O = S-(5-deoxy-D-ribos-5-yl)-L-homocysteine + adenine. It carries out the reaction S-methyl-5'-thioadenosine + H2O = 5-(methylsulfanyl)-D-ribose + adenine. It catalyses the reaction 5'-deoxyadenosine + H2O = 5-deoxy-D-ribose + adenine. It participates in amino-acid biosynthesis; L-methionine biosynthesis via salvage pathway; S-methyl-5-thio-alpha-D-ribose 1-phosphate from S-methyl-5'-thioadenosine (hydrolase route): step 1/2. Functionally, catalyzes the irreversible cleavage of the glycosidic bond in both 5'-methylthioadenosine (MTA) and S-adenosylhomocysteine (SAH/AdoHcy) to adenine and the corresponding thioribose, 5'-methylthioribose and S-ribosylhomocysteine, respectively. Also cleaves 5'-deoxyadenosine, a toxic by-product of radical S-adenosylmethionine (SAM) enzymes, into 5-deoxyribose and adenine. Thus, is required for in vivo function of the radical SAM enzymes biotin synthase and lipoic acid synthase, that are inhibited by 5'-deoxyadenosine accumulation. The polypeptide is 5'-methylthioadenosine/S-adenosylhomocysteine nucleosidase (Hamiltonella defensa subsp. Acyrthosiphon pisum (strain 5AT)).